Here is a 136-residue protein sequence, read N- to C-terminus: Large ribosomal subunit protein uL16c (136 aa).

This sequence belongs to the universal ribosomal protein uL16 family. In terms of assembly, part of the 50S ribosomal subunit.

It is found in the plastid. The protein localises to the chloroplast. The chain is Large ribosomal subunit protein uL16c from Buxus microphylla (Littleleaf boxwood).